Reading from the N-terminus, the 104-residue chain is Ribonuclease P protein component 4 (104 aa).

Residues Cys57, Cys60, Cys83, and Cys86 each contribute to the Zn(2+) site.

It belongs to the eukaryotic/archaeal RNase P protein component 4 family. Consists of a catalytic RNA component and at least 4-5 protein subunits. Zn(2+) is required as a cofactor.

The protein localises to the cytoplasm. It carries out the reaction Endonucleolytic cleavage of RNA, removing 5'-extranucleotides from tRNA precursor.. Part of ribonuclease P, a protein complex that generates mature tRNA molecules by cleaving their 5'-ends. This chain is Ribonuclease P protein component 4, found in Saccharolobus islandicus (strain L.S.2.15 / Lassen #1) (Sulfolobus islandicus).